The following is a 400-amino-acid chain: Plasminogen activator inhibitor 1 (400 aa).

The N-terminal stretch at 1 to 21 (MQMSTVCLALGLALVFGEASA) is a signal peptide. N-linked (GlcNAc...) asparagine glycans are attached at residues Asn-230, Asn-286, and Asn-350.

Belongs to the serpin family. Forms a heterodimer with TMPRSS7. Interacts with VTN. Binds LRP1B; binding is followed by internalization and degradation. Interacts with PPP1CB. In complex with PLAU/uPA, interacts with PLAUR/uPAR. Interacts with SORL1 and LRP1, either alone or in complex with PLAU; these interactions are abolished in the presence of LRPAP1/RAP. The ternary complex composed of PLAUR-PLAU-PAI1 also interacts with SORL1. Interacts with PLAT/tPA. Also interacts with SORL1, when complexed to PLAT/tPA.

It is found in the secreted. Serine protease inhibitor. Inhibits TMPRSS7. Is a primary inhibitor of tissue-type plasminogen activator (PLAT) and urokinase-type plasminogen activator (PLAU). As PLAT inhibitor, it is required for fibrinolysis down-regulation and is responsible for the controlled degradation of blood clots. As PLAU inhibitor, it is involved in the regulation of cell adhesion and spreading. Acts as a regulator of cell migration, independently of its role as protease inhibitor. It is required for stimulation of keratinocyte migration during cutaneous injury repair. It is involved in cellular and replicative senescence. Plays a role in alveolar type 2 cells senescence in the lung. Is involved in the regulation of cementogenic differentiation of periodontal ligament stem cells, and regulates odontoblast differentiation and dentin formation during odontogenesis. This chain is Plasminogen activator inhibitor 1 (SERPINE1), found in Neovison vison (American mink).